The sequence spans 304 residues: Acetyl-coenzyme A carboxylase carboxyl transferase subunit beta (304 aa).

The disordered stretch occupies residues 16–42 (SSLPPKNSEGGLAYFDEPSPEQESTRK). Residues 48–304 (LWVKCPKCGE…LLRYHQEGAV (257 aa)) form the CoA carboxyltransferase N-terminal domain. Residues Cys52, Cys55, Cys71, and Cys74 each coordinate Zn(2+). The C4-type zinc finger occupies 52–74 (CPKCGEALFNKDLVENQRVCLTC).

This sequence belongs to the AccD/PCCB family. In terms of assembly, acetyl-CoA carboxylase is a heterohexamer composed of biotin carboxyl carrier protein (AccB), biotin carboxylase (AccC) and two subunits each of ACCase subunit alpha (AccA) and ACCase subunit beta (AccD). Requires Zn(2+) as cofactor.

Its subcellular location is the cytoplasm. It catalyses the reaction N(6)-carboxybiotinyl-L-lysyl-[protein] + acetyl-CoA = N(6)-biotinyl-L-lysyl-[protein] + malonyl-CoA. The protein operates within lipid metabolism; malonyl-CoA biosynthesis; malonyl-CoA from acetyl-CoA: step 1/1. Functionally, component of the acetyl coenzyme A carboxylase (ACC) complex. Biotin carboxylase (BC) catalyzes the carboxylation of biotin on its carrier protein (BCCP) and then the CO(2) group is transferred by the transcarboxylase to acetyl-CoA to form malonyl-CoA. This Desulfitobacterium hafniense (strain Y51) protein is Acetyl-coenzyme A carboxylase carboxyl transferase subunit beta.